A 262-amino-acid polypeptide reads, in one-letter code: Tetratricopeptide repeat protein 33 (262 aa).

TPR repeat units lie at residues 59 to 92, 93 to 126, and 127 to 160; these read SKQL…TPND, ATLY…NPHS, and WESW…YPMN. Residue S197 is modified to Phosphoserine. Position 251 is a phosphothreonine (T251).

This chain is Tetratricopeptide repeat protein 33 (TTC33), found in Homo sapiens (Human).